Consider the following 296-residue polypeptide: MFS-type transporter pytF (296 aa).

The next 7 helical transmembrane spans lie at 30 to 50, 72 to 92, 98 to 118, 124 to 144, 157 to 177, 180 to 200, and 238 to 258; these read WLVVLGGFLAYFVTFGMLNSF, WIGSLQLFLLFIGGLFFGPVF, KVLFIPGTLLLSLSQMMVSLC, FILAQSLLFGIAVAMLFYPTI, LAMGIVLTGSSLGGIAWPLIL, LFAVVGFPWGLRIVGFISFAL, and VVGMLFVIWGMFIPFYYIPLF. N-linked (GlcNAc...) asparagine glycosylation occurs at Asn-265. The helical transmembrane segment at 271-291 threads the bilayer; it reads SLISILNAGSFVGRIVSGALA.

This sequence belongs to the major facilitator superfamily. Monocarboxylate porter (TC 2.A.1.13) family.

The protein resides in the cell membrane. In terms of biological role, MFS-type transporter; part of the gene cluster that mediates the biosynthesis of pyranterreones, a family of antioxidative compounds. Directly involved in the secretion of pyranterreones. This chain is MFS-type transporter pytF, found in Aspergillus terreus (strain NIH 2624 / FGSC A1156).